The primary structure comprises 308 residues: MSALEETQSLCKQVDDICNNGMESVEQCNKLLDQLSKIPMSIEIIQKTNIGIKVNMMRKKVTDDAVAKRAKNIIKDWKNVVDGKSKSQDDGGAPPAKKHRKESVEEAKPEKKKIEAPYKRPEPSSRPEIVAQFASASFPPKHLENDETRLKSAQLLLSALRFGDMPQGTLDPEELAVQIEEKLYSVHRDTNKSYSAAVRSRIFNLRDKKNLALRENVLTGVVRAEKFATMTSEEMASAEIREMRDKFTKEAILEHQMSVQQGTPSDMFKCGKCGKKNCTYTQLQTRSSDEPMTTFVFCLECGNRWKFC.

Positions 5–84 (EETQSLCKQV…KDWKNVVDGK (80 aa)) constitute a TFIIS N-terminal domain. Positions 82–126 (DGKSKSQDDGGAPPAKKHRKESVEEAKPEKKKIEAPYKRPEPSSR) are disordered. Positions 102-125 (ESVEEAKPEKKKIEAPYKRPEPSS) are enriched in basic and acidic residues. One can recognise a TFIIS central domain in the interval 148 to 263 (TRLKSAQLLL…EHQMSVQQGT (116 aa)). The TFIIS-type zinc finger occupies 266–306 (DMFKCGKCGKKNCTYTQLQTRSSDEPMTTFVFCLECGNRWK). The Zn(2+) site is built by Cys270, Cys273, Cys298, and Cys301.

Belongs to the TFS-II family.

It localises to the nucleus. Necessary for efficient RNA polymerase II transcription elongation past template-encoded arresting sites. The arresting sites in DNA have the property of trapping a certain fraction of elongating RNA polymerases that pass through, resulting in locked ternary complexes. Cleavage of the nascent transcript by S-II allows the resumption of elongation from the new 3'-terminus. This is Putative transcription elongation factor S-II from Caenorhabditis elegans.